The primary structure comprises 238 residues: Adenylate dimethylallyltransferase (238 aa).

Belongs to the isopentenyl transferase family.

The enzyme catalyses dimethylallyl diphosphate + AMP = N(6)-(dimethylallyl)adenosine 5'-phosphate + diphosphate. Transfers dimethylallyl groups to AMP as part of the biosynthesis of cytokinin phytohormones. This Ralstonia nicotianae (strain ATCC BAA-1114 / GMI1000) (Ralstonia solanacearum) protein is Adenylate dimethylallyltransferase (tzs).